Reading from the N-terminus, the 393-residue chain is Potassium channel subfamily K member 4 (393 aa).

The Cytoplasmic portion of the chain corresponds to 1–3 (MRS). A helical transmembrane segment spans residues 4-24 (TTLLALLALVLLYLVSGALVF). Residues 25–87 (RALEQPHEQQ…NSTSNSSHSA (63 aa)) are Extracellular-facing. N-linked (GlcNAc...) asparagine glycans are attached at residues Asn-78 and Asn-82. Positions 88-102 (WDLGSAFFFSGTIIT) form an intramembrane region, helical. K(+) contacts are provided by Thr-103, Ile-104, Gly-105, and Tyr-106. Residues 103–108 (TIGYGN) form a selectivity filter 1 region. The stretch at 103–109 (TIGYGNV) is an intramembrane region. The Extracellular segment spans residues 110-117 (ALRTDAGR). A helical membrane pass occupies residues 118 to 150 (LFCIFYALVGIPLFGILLAGVGDRLGSSLRHGI). Residues 151-172 (GHIEAIFLKWHVPPELVRVLSA) are Cytoplasmic-facing. A helical transmembrane segment spans residues 173-194 (MLFLLIGCLLFVLTPTFVFCYM). At 195-199 (EDWSK) the chain is on the extracellular side. Residues 200 to 213 (LEAIYFVIVTLTTV) constitute an intramembrane region (helical). K(+) is bound by residues Thr-212, Val-213, Gly-214, and Phe-215. Residues 212-217 (TVGFGD) are selectivity filter 2. Residues 214–219 (GFGDYV) lie within the membrane without spanning it. The Extracellular segment spans residues 220-233 (AGADPRQDSPAYQP). Residues 234 to 260 (LVWFWILLGLAYFASVLTTIGNWLRVV) form a helical membrane-spanning segment. Residues 261–393 (SRRTRAEMGG…GRPRDKGVPV (133 aa)) lie on the Cytoplasmic side of the membrane. The interval 285 to 393 (RVTQRAGPAA…GRPRDKGVPV (109 aa)) is disordered. Pro residues predominate over residues 319-332 (SPSPPEKAQPPSPP). Residues 365–384 (PRGRRRPNPPRKPVRPRGPG) show a composition bias toward basic residues.

It belongs to the two pore domain potassium channel (TC 1.A.1.8) family. As to quaternary structure, homodimer; disulfide-linked. Forms heterodimers with other 2-pore domain K(+) channel subunits, such as KCNK2 and KCNK10. N-glycosylated.

It localises to the cell membrane. The protein localises to the cell projection. The protein resides in the axon. It carries out the reaction K(+)(in) = K(+)(out). It catalyses the reaction Rb(+)(in) = Rb(+)(out). The enzyme catalyses Cs(+)(in) = Cs(+)(out). With respect to regulation, activated by mechanical stretch and arachidonic acid. In terms of biological role, k(+) channel that conducts voltage-dependent outward rectifying currents upon membrane depolarization. Voltage sensing is coupled to K(+) electrochemical gradient in an 'ion flux gating' mode where outward but not inward ion flow opens the gate. Converts to voltage-independent 'leak' conductance mode upon stimulation by various stimuli including mechanical membrane stretch, basic pH, heat and lipids. Homo- and heterodimerizes to form functional channels with distinct regulatory and gating properties. At trigeminal A-beta afferent nerves, the heterodimer of KCNK2/TREK-1 and KCNK4/TRAAK is mostly coexpressed at nodes of Ranvier where it conducts voltage-independent mechanosensitive and thermosensitive currents, allowing rapid action potential repolarization, high speed and high frequence saltatory conduction on myelinated nerves to ensure prompt sensory responses. Permeable to other monovalent cations such as Rb(+) and Cs(+). The protein is Potassium channel subfamily K member 4 of Homo sapiens (Human).